A 69-amino-acid chain; its full sequence is Guanine nucleotide-binding protein subunit gamma (69 aa).

An N-acetylserine modification is found at S2. At C66 the chain carries Cysteine methyl ester. A lipid anchor (S-geranylgeranyl cysteine) is attached at C66. Residues S67–L69 constitute a propeptide, removed in mature form.

It belongs to the G protein gamma family. In terms of assembly, g proteins are composed of 3 units, alpha, beta and gamma. Interacts with gpbA, and this requires phlp1. Post-translationally, this protein is thought to be subject to lipidation, and this requires phlp1.

It localises to the cell membrane. Functionally, guanine nucleotide-binding proteins (G proteins) are involved as a modulator or transducer in various transmembrane signaling systems. This major G-protein of the squid photoreceptor is involved in visual transduction. The beta and gamma chains are required for the GTPase activity, for replacement of GDP by GTP, and for G protein-effector interaction. Required for normal chemotaxis in response to cAMP. The polypeptide is Guanine nucleotide-binding protein subunit gamma (gpgA) (Dictyostelium discoideum (Social amoeba)).